The primary structure comprises 963 residues: Longitudinals lacking protein, isoforms J/P/Q/S/Z (963 aa).

Residues 32-97 (VDCTLAAEGK…MYRGEVNISQ (66 aa)) enclose the BTB domain. 4 disordered regions span residues 115–200 (LSDN…SSVL), 228–340 (SSGP…ASAS), 447–469 (DAQQ…RIRV), and 482–520 (GKSS…VSTT). Low complexity-rich tracts occupy residues 162–175 (SGDV…SSSP), 228–251 (SSGP…LTST), 263–293 (TSST…QTTS), and 329–340 (NSATGPNPASAS). The span at 491–512 (KLTQSKKSLISDAKTTNKTSTP) shows a compositional bias: polar residues. The C2H2-type 1; degenerate zinc-finger motif lies at 849–871 (WVCRNCNRTYKWKNSLKCHLKNE). The C2H2-type 2; degenerate zinc-finger motif lies at 878–901 (YFCSKMCGYATNVHSNLKRHLNTK). The disordered stretch occupies residues 900 to 963 (TKCRDREKDA…YTLVFQNDSA (64 aa)). The span at 901–915 (KCRDREKDADDEKKP) shows a compositional bias: basic and acidic residues. The span at 937–953 (SSSNNNNNGGGSSTSST) shows a compositional bias: low complexity. Residues 954–963 (YTLVFQNDSA) are compositionally biased toward polar residues.

In terms of tissue distribution, by stage 11, isoform Q, isoform P and isoform Z are expressed throughout the mesoderm. From stage 15, expression of isoform P expands to all tissues, whereas expression of isoform Z and isoform Q becomes restricted during later stages; starting from stage 14 to 16, isoform Z is expressed in muscle, and isoform Q and isoform Z are expressed in the CNS. For some isoforms, expression is also seen in specific types of cells in the embryo; isoform Z is expressed in the ventral furrow at stage 5, and isoform Q is expressed around the tracheal pits at stage 11. Isoform Z also shows transient enrichment in a dorsal cell layer in the CNS at stages 13 and 14.

Its subcellular location is the nucleus. Functionally, putative transcription factor required for axon growth and guidance in the central and peripheral nervous systems. Repels CNS axons away from the midline by promoting the expression of the midline repellent sli and its receptor robo. The protein is Longitudinals lacking protein, isoforms J/P/Q/S/Z of Drosophila melanogaster (Fruit fly).